The sequence spans 1101 residues: Carbamoyl phosphate synthase large chain (1101 aa).

The tract at residues 1–402 is carboxyphosphate synthetic domain; that stretch reads MPKRTDLKSV…ALQKALRSLE (402 aa). 12 residues coordinate ATP: Arg129, Arg169, Gly175, Gly176, Glu208, Ile210, Glu215, Gly241, Val242, His243, Gln285, and Glu299. An ATP-grasp 1 domain is found at 133-328; that stretch reads KGVVERAGGE…IAKIATKLAL (196 aa). Mg(2+) is bound by residues Gln285, Glu299, and Asn301. Residues Gln285, Glu299, and Asn301 each contribute to the Mn(2+) site. The oligomerization domain stretch occupies residues 403 to 544; sequence QKGSELAFPQ…YRYSSYDLET (142 aa). Residues 545–947 form a carbamoyl phosphate synthetic domain region; it reads EVAPHEGESV…AFAKSQSAAG (403 aa). Residues 675-866 form the ATP-grasp 2 domain; that stretch reads ALVLERAGLV…LAKAAARIGV (192 aa). The ATP site is built by Arg711, Arg750, Leu752, Glu757, Gly782, Ile783, His784, Ser785, Gln825, and Glu837. Mg(2+) is bound by residues Gln825, Glu837, and Asn839. The Mn(2+) site is built by Gln825, Glu837, and Asn839. Residues 948–1093 enclose the MGS-like domain; sequence GPLPTSGRVF…QEHDARLQQA (146 aa). The allosteric domain stretch occupies residues 948–1101; the sequence is GPLPTSGRVF…QAVAGPEAAA (154 aa).

Belongs to the CarB family. As to quaternary structure, composed of two chains; the small (or glutamine) chain promotes the hydrolysis of glutamine to ammonia, which is used by the large (or ammonia) chain to synthesize carbamoyl phosphate. Tetramer of heterodimers (alpha,beta)4. It depends on Mg(2+) as a cofactor. Mn(2+) serves as cofactor.

It catalyses the reaction hydrogencarbonate + L-glutamine + 2 ATP + H2O = carbamoyl phosphate + L-glutamate + 2 ADP + phosphate + 2 H(+). The catalysed reaction is hydrogencarbonate + NH4(+) + 2 ATP = carbamoyl phosphate + 2 ADP + phosphate + 2 H(+). The protein operates within amino-acid biosynthesis; L-arginine biosynthesis; carbamoyl phosphate from bicarbonate: step 1/1. Its pathway is pyrimidine metabolism; UMP biosynthesis via de novo pathway; (S)-dihydroorotate from bicarbonate: step 1/3. In terms of biological role, large subunit of the glutamine-dependent carbamoyl phosphate synthetase (CPSase). CPSase catalyzes the formation of carbamoyl phosphate from the ammonia moiety of glutamine, carbonate, and phosphate donated by ATP, constituting the first step of 2 biosynthetic pathways, one leading to arginine and/or urea and the other to pyrimidine nucleotides. The large subunit (synthetase) binds the substrates ammonia (free or transferred from glutamine from the small subunit), hydrogencarbonate and ATP and carries out an ATP-coupled ligase reaction, activating hydrogencarbonate by forming carboxy phosphate which reacts with ammonia to form carbamoyl phosphate. This is Carbamoyl phosphate synthase large chain from Micrococcus luteus (strain ATCC 4698 / DSM 20030 / JCM 1464 / CCM 169 / CCUG 5858 / IAM 1056 / NBRC 3333 / NCIMB 9278 / NCTC 2665 / VKM Ac-2230) (Micrococcus lysodeikticus).